The chain runs to 548 residues: Mannosyltransferase APTG1 (548 aa).

Residues 1–23 (MDIRKRKNAGGDGDGGADGASVN) are disordered. A run of 3 helical transmembrane segments spans residues 41–61 (IFLFCLAFRVVNALLIQTYFN), 98–118 (LFAFLYKLLQVTGLDTPYIMI), and 146–166 (GNVATWSLFCQMANWFIFFCL). A glycan (N-linked (GlcNAc...) asparagine) is linked at asparagine 167. 7 consecutive transmembrane segments (helical) span residues 169 to 189 (TFSNCLETVLTIMGLYYWPCI), 204 to 224 (LVIAALACAIRPTSAVIWLYV), 238 to 258 (FIILEVIPIGSLVLGFTCLLD), 260 to 280 (LMYGSWVIVPLNFLKFNFLSS), 294 to 314 (FTQGFLVMLFTFTPFSIAGII), 320 to 340 (KLSALILWVLAIYSILGHKEF), and 342 to 362 (FVLPVLPIALIFSGYAFAQME). The N-linked (GlcNAc...) asparagine glycan is linked to asparagine 382. Residues 392-412 (LSVYFLLATNIPMALYMSLFH) form a helical membrane-spanning segment. N-linked (GlcNAc...) asparagine glycosylation occurs at asparagine 490.

Belongs to the glycosyltransferase 22 family. In terms of tissue distribution, mostly expressed, mainly in vascular tissues, in leaves, roots, stems, flowers, siliques and pollen, and, to a lower extent, in seedlings.

It is found in the endoplasmic reticulum membrane. In terms of biological role, mannosyltransferase involved in glycosylphosphatidylinositol-anchor biosynthesis. Required for the pollen tube micropylar guidance and embryo development by regulating GPI-anchor mediated protein localization (e.g. COBL10 and A36). The sequence is that of Mannosyltransferase APTG1 from Arabidopsis thaliana (Mouse-ear cress).